The sequence spans 279 residues: GTP cyclohydrolase MptA (279 aa).

This sequence belongs to the GTP cyclohydrolase IV family. As to quaternary structure, homodimer. Requires Fe(2+) as cofactor.

It catalyses the reaction GTP + H2O = 7,8-dihydroneopterin 2',3'-cyclic phosphate + formate + diphosphate + H(+). Its pathway is cofactor biosynthesis; 5,6,7,8-tetrahydromethanopterin biosynthesis. Converts GTP to 7,8-dihydro-D-neopterin 2',3'-cyclic phosphate, the first intermediate in the biosynthesis of coenzyme methanopterin. The protein is GTP cyclohydrolase MptA of Korarchaeum cryptofilum (strain OPF8).